We begin with the raw amino-acid sequence, 198 residues long: Zinc finger protein 41 (198 aa).

Basic residues predominate over residues 1-12 (MEKPATRKKKSQ). Positions 1 to 56 (MEKPATRKKKSQAPKEEAGAQKATVKGEKTSKGKKATKKPRKPRRPRKEPVLSPED) are disordered. Positions 13–31 (APKEEAGAQKATVKGEKTS) are enriched in basic and acidic residues. The segment covering 32-47 (KGKKATKKPRKPRRPR) has biased composition (basic residues). C2H2-type zinc fingers lie at residues 87-109 (YECGECGRIFKHKTDHIRHQRVH), 115-137 (FKCDQCGKTFRHSSDVTKHQRIH), 143-165 (FKCGECGKAFNCGSNLLKHQKTH), and 171-193 (YGCEECGKSFAYSSCLIRHRKRH).

This sequence belongs to the krueppel C2H2-type zinc-finger protein family. In terms of tissue distribution, predominantly in the spermatocytes and spermatids of testes. It is also expressed in the fetus and embryonic stem cells at lower levels.

Its subcellular location is the nucleus. Its function is as follows. A putative DNA-binding regulatory protein associated with meiosis in spermatogenesis. This is Zinc finger protein 41 (Zfp41) from Mus musculus (Mouse).